The primary structure comprises 686 residues: Chondroitin synthase (686 aa).

A galactosaminyltransferase; A1 domain region spans residues 130–417 (YVWAGKRKEL…LLQQKVPYFY (288 aa)). Residues Pro157, Arg161, Asp188, Tyr217, Arg223, and 239–240 (DC) contribute to the UDP-N-acetyl-alpha-D-galactosamine site. Asp241 is a binding site for Mn(2+). UDP-N-acetyl-alpha-D-galactosamine is bound at residue 361-362 (ED). A Mn(2+)-binding site is contributed by His386. Positions 418 to 682 (RKKEKIESAT…ECRKYTWEKI (265 aa)) are glucuronosyltransferase; A2 domain. Residues Tyr441, Asp469, and 517–520 (QLDS) contribute to the UDP-alpha-D-glucuronate site. Residue Asp521 coordinates Mn(2+). UDP-alpha-D-glucuronate is bound by residues His581 and 603–604 (AV). His631 serves as a coordination point for Mn(2+).

Belongs to the glycosyltransferase 2 family. CS/HAS subfamily. Mn(2+) serves as cofactor.

It carries out the reaction 3-O-(beta-D-GlcA-(1-&gt;3)-beta-D-GalNAc-(1-&gt;4)-beta-D-GlcA-(1-&gt;3)-beta-D-Gal-(1-&gt;3)-beta-D-Gal-(1-&gt;4)-beta-D-Xyl)-L-seryl-[protein] + UDP-N-acetyl-alpha-D-galactosamine = 3-O-(beta-D-GalNAc-(1-&gt;4)-beta-D-GlcA-(1-&gt;3)-beta-D-GalNAc-(1-&gt;4)-beta-D-GlcA-(1-&gt;3)-beta-D-Gal-(1-&gt;3)-beta-D-Gal-(1-&gt;4)-beta-D-Xyl)-L-seryl-[protein] + UDP + H(+). The enzyme catalyses 3-O-{beta-D-GlcA-(1-&gt;3)-[beta-D-GalNAc-(1-&gt;4)-beta-D-GlcA-(1-&gt;3)](n)-beta-D-GalNAc-(1-&gt;4)-beta-D-GlcA-(1-&gt;3)-beta-D-Gal-(1-&gt;3)-beta-D-Gal-(1-&gt;4)-beta-D-Xyl}-L-seryl-[protein] + UDP-N-acetyl-alpha-D-galactosamine = 3-O-{[beta-D-GalNAc-(1-&gt;4)-beta-D-GlcA-(1-&gt;3)](n+1)-beta-D-GalNAc-(1-&gt;4)-beta-D-GlcA-(1-&gt;3)-beta-D-Gal-(1-&gt;3)-beta-D-Gal-(1-&gt;4)-beta-D-Xyl}-L-seryl-[protein] + UDP + H(+). The catalysed reaction is 3-O-(beta-D-GalNAc-(1-&gt;4)-beta-D-GlcA-(1-&gt;3)-beta-D-Gal-(1-&gt;3)-beta-D-Gal-(1-&gt;4)-beta-D-Xyl)-L-seryl-[protein] + UDP-alpha-D-glucuronate = 3-O-(beta-D-GlcA-(1-&gt;3)-beta-D-GalNAc-(1-&gt;4)-beta-D-GlcA-(1-&gt;3)-beta-D-Gal-(1-&gt;3)-beta-D-Gal-(1-&gt;4)-beta-D-Xyl)-L-seryl-[protein] + UDP + H(+). It catalyses the reaction 3-O-{[beta-D-GalNAc-(1-&gt;4)-beta-D-GlcA-(1-&gt;3)](n)-beta-D-GalNAc-(1-&gt;4)-beta-D-GlcA-(1-&gt;3)-beta-D-Gal-(1-&gt;3)-beta-D-Gal-(1-&gt;4)-beta-D-Xyl}-L-seryl-[protein] + UDP-alpha-D-glucuronate = 3-O-{beta-D-GlcA-(1-&gt;3)-[beta-D-GalNAc-(1-&gt;4)-beta-D-GlcA-(1-&gt;3)](n)-beta-D-GalNAc-(1-&gt;4)-beta-D-GlcA-(1-&gt;3)-beta-D-Gal-(1-&gt;3)-beta-D-Gal-(1-&gt;4)-beta-D-Xyl}-L-seryl-[protein] + UDP + H(+). Glycosyltransferase that catalyzes elongation of chondroitin, a polysaccharide composed of a repeating disaccharide of N-acetylgalactosamine (GalNAc) and glucuronic acid (GlcUA) units, by alternatively transferring the GlcUA and GalNAc moiety from UDP-GlcUA and UDP-GalNAc to the non-reducing ends of the chondroitin chain. Each chondroitin unit has the composition beta-(1-&gt;4)-GlcUA-beta-(1-&gt;3)-GalNAc. The chain is Chondroitin synthase (kfoC) from Escherichia coli.